We begin with the raw amino-acid sequence, 414 residues long: STAGA complex 65 subunit gamma (414 aa).

The tract at residues 87–108 (NQQQTEGVKTEESEPLPSCPGS) is disordered. Ser-108 bears the Phosphoserine mark. A Glycyl lysine isopeptide (Lys-Gly) (interchain with G-Cter in SUMO2) cross-link involves residue Lys-271. Phosphoserine occurs at positions 323 and 334. Positions 346–414 (PQESEEGNVS…QRCKKRMRKI (69 aa)) are disordered. The segment covering 386-395 (SSYGSHSTDS) has biased composition (low complexity).

Component of the STAGA transcription coactivator-HAT complex, at least composed of SUPT3H, SUPT7L, GCN5L2, TAF5L, TAF6L, TADA3L, TAD1L, TAF10, TAF12 and TAF9. Sumoylated. As to expression, expressed at high levels in adenocarcinomas and gliomas and low in esophageal cancers and malignant hematological disease. Also expressed at high level in the thymus, low in peripheral blood mononuclear cells, and lowest in the stomach, small intestine, and skeletal muscle.

The protein resides in the nucleus. This Homo sapiens (Human) protein is STAGA complex 65 subunit gamma (SUPT7L).